The sequence spans 302 residues: Genome polyprotein (302 aa).

Over residues 28 to 46 (ENLDTGKDSKKDTSGKGDK) the composition is skewed to basic and acidic residues. The interval 28–72 (ENLDTGKDSKKDTSGKGDKPQNSQTGQGSKEQTKIGTVSKDVNVG) is disordered. The span at 47-63 (PQNSQTGQGSKEQTKIG) shows a compositional bias: polar residues.

The protein belongs to the potyviridae genome polyprotein family. Genome polyprotein of potyviruses undergoes post-translational proteolytic processing by the main proteinase NIa-pro resulting in the production of at least ten individual proteins. The P1 proteinase and the HC-pro cleave only their respective C-termini autocatalytically. 6K1 is essential for proper proteolytic separation of P3 from CI.

The protein resides in the virion. It catalyses the reaction RNA(n) + a ribonucleoside 5'-triphosphate = RNA(n+1) + diphosphate. An RNA-dependent RNA polymerase that plays an essential role in the virus replication. Functionally, involved in aphid transmission, cell-to-cell and systemis movement, encapsidation of the viral RNA and in the regulation of viral RNA amplification. This is Genome polyprotein from Watermelon mosaic virus II (isolate Australia).